We begin with the raw amino-acid sequence, 201 residues long: Urease accessory protein UreG (201 aa).

Position 11-18 (11-18 (GPVGSGKT)) interacts with GTP.

Belongs to the SIMIBI class G3E GTPase family. UreG subfamily. As to quaternary structure, homodimer. UreD, UreF and UreG form a complex that acts as a GTP-hydrolysis-dependent molecular chaperone, activating the urease apoprotein by helping to assemble the nickel containing metallocenter of UreC. The UreE protein probably delivers the nickel.

It localises to the cytoplasm. In terms of biological role, facilitates the functional incorporation of the urease nickel metallocenter. This process requires GTP hydrolysis, probably effectuated by UreG. The chain is Urease accessory protein UreG from Synechococcus sp. (strain CC9902).